Here is a 177-residue protein sequence, read N- to C-terminus: uncharacterized protein (177 aa).

To M.jannaschii MJ0628.

This is an uncharacterized protein from Methanocaldococcus jannaschii (strain ATCC 43067 / DSM 2661 / JAL-1 / JCM 10045 / NBRC 100440) (Methanococcus jannaschii).